The sequence spans 374 residues: 4-hydroxy-3-methylbut-2-en-1-yl diphosphate synthase (flavodoxin) (374 aa).

[4Fe-4S] cluster contacts are provided by C272, C275, C307, and E314.

Belongs to the IspG family. The cofactor is [4Fe-4S] cluster.

It carries out the reaction (2E)-4-hydroxy-3-methylbut-2-enyl diphosphate + oxidized [flavodoxin] + H2O + 2 H(+) = 2-C-methyl-D-erythritol 2,4-cyclic diphosphate + reduced [flavodoxin]. The protein operates within isoprenoid biosynthesis; isopentenyl diphosphate biosynthesis via DXP pathway; isopentenyl diphosphate from 1-deoxy-D-xylulose 5-phosphate: step 5/6. Its function is as follows. Converts 2C-methyl-D-erythritol 2,4-cyclodiphosphate (ME-2,4cPP) into 1-hydroxy-2-methyl-2-(E)-butenyl 4-diphosphate. This is 4-hydroxy-3-methylbut-2-en-1-yl diphosphate synthase (flavodoxin) from Acidiphilium cryptum (strain JF-5).